The chain runs to 614 residues: RNA polymerase sigma factor RpoD (614 aa).

The tract at residues 168 to 245 (DPDDNIAAPT…PEEKRSYPQG (78 aa)) is disordered. Acidic residues predominate over residues 193–209 (EADDDEEESEGGDDEEE). The span at 215–232 (TRSSQPSVSVRYPSSFSD) shows a compositional bias: polar residues. The interval 380-450 (MVEANLRLVI…TRSIADQART (71 aa)) is sigma-70 factor domain-2. An Interaction with polymerase core subunit RpoC motif is present at residues 404 to 407 (DLIQ). Residues 459-535 (ETINKLNRIS…DSTMQSPIYV (77 aa)) form a sigma-70 factor domain-3 region. The segment at 548–601 (VLSGLTAREAKVLRMRFGIDMNTDHTLEEVGKQFDVTRERIRQIEAKAWRKLRH) is sigma-70 factor domain-4. The segment at residues 574–593 (LEEVGKQFDVTRERIRQIEA) is a DNA-binding region (H-T-H motif).

Belongs to the sigma-70 factor family. RpoD/SigA subfamily. Interacts transiently with the RNA polymerase catalytic core.

Its subcellular location is the cytoplasm. Its function is as follows. Sigma factors are initiation factors that promote the attachment of RNA polymerase to specific initiation sites and are then released. This sigma factor is the primary sigma factor during exponential growth. The chain is RNA polymerase sigma factor RpoD from Pseudomonas putida (Arthrobacter siderocapsulatus).